The primary structure comprises 217 residues: Elongation factor Ts (217 aa).

An involved in Mg(2+) ion dislocation from EF-Tu region spans residues 82–85 (TDFV).

Belongs to the EF-Ts family.

The protein localises to the cytoplasm. Associates with the EF-Tu.GDP complex and induces the exchange of GDP to GTP. It remains bound to the aminoacyl-tRNA.EF-Tu.GTP complex up to the GTP hydrolysis stage on the ribosome. This Synechococcus sp. (strain RCC307) protein is Elongation factor Ts.